We begin with the raw amino-acid sequence, 22 residues long: Melittin-related peptide FQ-22-1 (22 aa).

Position 22 is a glutamine amide (Gln-22).

As to expression, expressed by the skin glands.

The protein localises to the secreted. This Rana arvalis (Moor frog) protein is Melittin-related peptide FQ-22-1.